A 431-amino-acid polypeptide reads, in one-letter code: Leucine carboxyl methyltransferase 1 (431 aa).

Residues arginine 103, glycine 131, aspartate 159, and 219–220 (DL) each bind S-adenosyl-L-methionine. Positions 228–268 (QPQQPLPPGVPIGSRGLHASPFTPGSTTQHEEQTEETSLPQ) are disordered. Glutamate 289 contacts S-adenosyl-L-methionine.

This sequence belongs to the methyltransferase superfamily. LCMT family.

The catalysed reaction is [phosphatase 2A protein]-C-terminal L-leucine + S-adenosyl-L-methionine = [phosphatase 2A protein]-C-terminal L-leucine methyl ester + S-adenosyl-L-homocysteine. Methylates the carboxyl group of the C-terminal leucine residue of protein phosphatase 2A catalytic subunits to form alpha-leucine ester residues. The sequence is that of Leucine carboxyl methyltransferase 1 (ppm-1) from Neurospora crassa (strain ATCC 24698 / 74-OR23-1A / CBS 708.71 / DSM 1257 / FGSC 987).